The primary structure comprises 154 residues: Ribosomal RNA large subunit methyltransferase H (154 aa).

S-adenosyl-L-methionine contacts are provided by residues L76, G103, and L122 to L127.

The protein belongs to the RNA methyltransferase RlmH family. In terms of assembly, homodimer.

The protein localises to the cytoplasm. The enzyme catalyses pseudouridine(1915) in 23S rRNA + S-adenosyl-L-methionine = N(3)-methylpseudouridine(1915) in 23S rRNA + S-adenosyl-L-homocysteine + H(+). Specifically methylates the pseudouridine at position 1915 (m3Psi1915) in 23S rRNA. The polypeptide is Ribosomal RNA large subunit methyltransferase H (Wolinella succinogenes (strain ATCC 29543 / DSM 1740 / CCUG 13145 / JCM 31913 / LMG 7466 / NCTC 11488 / FDC 602W) (Vibrio succinogenes)).